The following is a 151-amino-acid chain: Large ribosomal subunit protein uL13 (151 aa).

It belongs to the universal ribosomal protein uL13 family. As to quaternary structure, part of the 50S ribosomal subunit.

Its function is as follows. This protein is one of the early assembly proteins of the 50S ribosomal subunit, although it is not seen to bind rRNA by itself. It is important during the early stages of 50S assembly. The polypeptide is Large ribosomal subunit protein uL13 (Rippkaea orientalis (strain PCC 8801 / RF-1) (Cyanothece sp. (strain PCC 8801))).